Here is a 503-residue protein sequence, read N- to C-terminus: ATP synthase subunit alpha, chloroplastic (503 aa).

Residue 170–177 participates in ATP binding; the sequence is GDRQTGKT.

Belongs to the ATPase alpha/beta chains family. In terms of assembly, F-type ATPases have 2 components, CF(1) - the catalytic core - and CF(0) - the membrane proton channel. CF(1) has five subunits: alpha(3), beta(3), gamma(1), delta(1), epsilon(1). CF(0) has four main subunits: a, b, b' and c.

The protein resides in the plastid. The protein localises to the chloroplast thylakoid membrane. It carries out the reaction ATP + H2O + 4 H(+)(in) = ADP + phosphate + 5 H(+)(out). Produces ATP from ADP in the presence of a proton gradient across the membrane. The alpha chain is a regulatory subunit. The sequence is that of ATP synthase subunit alpha, chloroplastic from Trieres chinensis (Marine centric diatom).